The chain runs to 412 residues: Imidazolonepropionase (412 aa).

Fe(3+)-binding residues include His76 and His78. The Zn(2+) site is built by His76 and His78. 4-imidazolone-5-propanoate contacts are provided by Arg85, Tyr148, and His181. Tyr148 lines the N-formimidoyl-L-glutamate pocket. His242 lines the Fe(3+) pocket. His242 lines the Zn(2+) pocket. Residue Glu245 coordinates 4-imidazolone-5-propanoate. Fe(3+) is bound at residue Asp317. Zn(2+) is bound at residue Asp317. 2 residues coordinate N-formimidoyl-L-glutamate: Asn319 and Gly321. Residue Ser322 coordinates 4-imidazolone-5-propanoate.

This sequence belongs to the metallo-dependent hydrolases superfamily. HutI family. The cofactor is Zn(2+). Fe(3+) is required as a cofactor.

The protein resides in the cytoplasm. The enzyme catalyses 4-imidazolone-5-propanoate + H2O = N-formimidoyl-L-glutamate. The protein operates within amino-acid degradation; L-histidine degradation into L-glutamate; N-formimidoyl-L-glutamate from L-histidine: step 3/3. In terms of biological role, catalyzes the hydrolytic cleavage of the carbon-nitrogen bond in imidazolone-5-propanoate to yield N-formimidoyl-L-glutamate. It is the third step in the universal histidine degradation pathway. The sequence is that of Imidazolonepropionase from Staphylococcus aureus (strain Mu50 / ATCC 700699).